Consider the following 538-residue polypeptide: Exo-alpha-bergamotene synthase (538 aa).

Positions 291, 295, 435, 439, and 443 each coordinate Mg(2+). The DDXXD motif motif lies at Asp-291–Asp-295.

This sequence belongs to the terpene synthase family. Mg(2+) serves as cofactor. Mn(2+) is required as a cofactor.

The catalysed reaction is (2E,6E)-farnesyl diphosphate = (1S,5S,6R)-alpha-bergamotene + diphosphate. Catalyzes a mixture of sesquiterpenoids from (2E,6E)-farnesyl diphosphate. Catalyzes the formation of exo-alpha-bergamotene, as well as (E)-nerolidol, (Z)-alpha-bisabolene, (E)-beta-farnesene and beta-sesquiphellandrene. Also has activity towards geranyl diphosphate, but to a much lesser extent. The protein is Exo-alpha-bergamotene synthase of Lavandula angustifolia (Lavender).